The primary structure comprises 79 residues: MSTKETVIDLFDRLFMEDVSDMMDEDLFDAGVLDSLGTVELIVEIESIFNIKVPISEFGREDWNTANKIIQGIEELQHA.

Residues 1–77 enclose the Carrier domain; that stretch reads MSTKETVIDL…KIIQGIEELQ (77 aa). Serine 35 carries the post-translational modification O-(pantetheine 4'-phosphoryl)serine.

This sequence belongs to the DltC family. In terms of processing, 4'-phosphopantetheine is transferred from CoA to a specific serine of apo-DCP.

It is found in the cytoplasm. The protein operates within cell wall biogenesis; lipoteichoic acid biosynthesis. Functionally, carrier protein involved in the D-alanylation of lipoteichoic acid (LTA). The loading of thioester-linked D-alanine onto DltC is catalyzed by D-alanine--D-alanyl carrier protein ligase DltA. The DltC-carried D-alanyl group is further transferred to cell membrane phosphatidylglycerol (PG) by forming an ester bond, probably catalyzed by DltD. D-alanylation of LTA plays an important role in modulating the properties of the cell wall in Gram-positive bacteria, influencing the net charge of the cell wall. This is D-alanyl carrier protein from Streptococcus equi subsp. equi (strain 4047).